A 290-amino-acid polypeptide reads, in one-letter code: O-methyltransferase agiB (290 aa).

Asp155 contacts S-adenosyl-L-methionine. His194 functions as the Proton acceptor in the catalytic mechanism.

Belongs to the class I-like SAM-binding methyltransferase superfamily. Cation-independent O-methyltransferase family.

It functions in the pathway secondary metabolite biosynthesis. Functionally, O-methyltransferase; part of the gene cluster that mediates the biosynthesis of the aspergillicins A and F, 2 cryptic cyclic hexa-depsipeptides. The hexamodular NRPS agiA catalyzes the condensation of the six amino acid residues including N-Me-L-O-Me-tyrosine, L-proline 1, L-proline 2, D-isoleucine, O-acetyl-threonine, and L-isoleucine. The starting condensation domain (C1) of agiA probably loads acetyl-CoA which is condensed on the N-terminus of threonine by the first module to yield O-acetyl-threonine. The second module then loads L-isoleucine. The epimerase (E) domain on module 2 is probably involved in the formation of the D-isoleucine moiety. Modules 3 and 4 further load 2 successive L-prolines. Module 5 is then involved in the condensation of O-Me-L-tyrosine produced by the O-methyltransferase agiB and the N-methyl transferase (NMeT) domain on module 5 probably catalyzes the N-methylation to yield the N-Me-L-O-Me-tyrosine moiety. The A domain of module 5 loads preferentially O-Me-L-tyrosine, but it can also accept L-phenylalanine, which leads to the production of aspergillicin G. Module 6 then loads the last residue, L-isoleucine. The C-terminal thiolesterase (TE) domain probably cyclizes the peptide using the hydroxy group from threonine to form the cyclic depsipeptide. The polypeptide is O-methyltransferase agiB (Aspergillus flavus (strain ATCC 200026 / FGSC A1120 / IAM 13836 / NRRL 3357 / JCM 12722 / SRRC 167)).